A 96-amino-acid chain; its full sequence is Large ribosomal subunit protein uL23 (96 aa).

The protein belongs to the universal ribosomal protein uL23 family. As to quaternary structure, part of the 50S ribosomal subunit. Contacts protein L29, and trigger factor when it is bound to the ribosome.

Functionally, one of the early assembly proteins it binds 23S rRNA. One of the proteins that surrounds the polypeptide exit tunnel on the outside of the ribosome. Forms the main docking site for trigger factor binding to the ribosome. In Vesicomyosocius okutanii subsp. Calyptogena okutanii (strain HA), this protein is Large ribosomal subunit protein uL23.